The following is a 337-amino-acid chain: Transcription initiation factor IIB (337 aa).

The TFIIB-type zinc-finger motif lies at 37–68 (YTVECPECGSRALVRDYERAELVCSECGLVID). Zn(2+) is bound by residues Cys-41, Cys-44, Cys-60, and Cys-63. 2 tandem repeats follow at residues 154 to 237 (SELD…SREL) and 248 to 329 (DYIP…ELAE).

This sequence belongs to the TFIIB family.

Functionally, stabilizes TBP binding to an archaeal box-A promoter. Also responsible for recruiting RNA polymerase II to the pre-initiation complex (DNA-TBP-TFIIB). This is Transcription initiation factor IIB from Methanothrix thermoacetophila (strain DSM 6194 / JCM 14653 / NBRC 101360 / PT) (Methanosaeta thermophila).